A 307-amino-acid chain; its full sequence is Porphobilinogen deaminase (307 aa).

Cys239 bears the S-(dipyrrolylmethanemethyl)cysteine mark.

This sequence belongs to the HMBS family. Monomer. The cofactor is dipyrromethane.

It carries out the reaction 4 porphobilinogen + H2O = hydroxymethylbilane + 4 NH4(+). It participates in porphyrin-containing compound metabolism; protoporphyrin-IX biosynthesis; coproporphyrinogen-III from 5-aminolevulinate: step 2/4. Tetrapolymerization of the monopyrrole PBG into the hydroxymethylbilane pre-uroporphyrinogen in several discrete steps. The protein is Porphobilinogen deaminase of Campylobacter jejuni subsp. doylei (strain ATCC BAA-1458 / RM4099 / 269.97).